Reading from the N-terminus, the 295-residue chain is Maintenance of mitochondrial morphology protein 1 (295 aa).

Residues 1 to 12 (MVQLFHLTFTQG) lie on the Lumenal side of the membrane. Residues 13–33 (FFIGQLSVIVIVYIFLRFFLF) form a helical membrane-spanning segment. Residues 34 to 295 (CTKEELKNVQ…REGHRQKSTE (262 aa)) are Cytoplasmic-facing. The SMP-LTD domain maps to 81–278 (EEESLDWFNV…SPQFQQISIP (198 aa)).

The protein belongs to the MMM1 family. As to quaternary structure, homodimer. Component of the ER-mitochondria encounter structure (ERMES) or MDM complex, composed of mmm1, mdm10, mdm12 and mdm34. A mmm1 homodimer associates with one molecule of mdm12 on each side in a pairwise head-to-tail manner, and the SMP-LTD domains of mmm1 and mdm12 generate a continuous hydrophobic tunnel for phospholipid trafficking.

The protein localises to the endoplasmic reticulum membrane. Component of the ERMES/MDM complex, which serves as a molecular tether to connect the endoplasmic reticulum (ER) and mitochondria. Components of this complex are involved in the control of mitochondrial shape and protein biogenesis, and function in nonvesicular lipid trafficking between the ER and mitochondria. The mdm12-mmm1 subcomplex functions in the major beta-barrel assembly pathway that is responsible for biogenesis of all outer membrane beta-barrel proteins, and acts in a late step after the SAM complex. The mdm10-mdm12-mmm1 subcomplex further acts in the TOM40-specific pathway after the action of the mdm12-mmm1 complex. Essential for establishing and maintaining the structure of mitochondria and maintenance of mtDNA nucleoids. This chain is Maintenance of mitochondrial morphology protein 1, found in Schizosaccharomyces japonicus (strain yFS275 / FY16936) (Fission yeast).